A 219-amino-acid polypeptide reads, in one-letter code: Leukocyte surface antigen CD53 (219 aa).

Topologically, residues 1 to 11 (MGMSSLKLLKY) are cytoplasmic. Residues 12–32 (VLFIFNLLFWVCGCCILGFGI) traverse the membrane as a helical segment. Residues 33 to 54 (YFLVQNTYGVLFRNLPFLTLGN) lie on the Extracellular side of the membrane. A helical membrane pass occupies residues 55-69 (ILVIVGSIIMVVAFL). Residues 70 to 80 (GCMGSIKENKC) lie on the Cytoplasmic side of the membrane. Residues 81–106 (LLMSFFVLLLIILLAEVTIAILLFVY) form a helical membrane-spanning segment. The Extracellular segment spans residues 107-181 (EQKLNTLVAE…NKAKSWFHSN (75 aa)). Asn-119, Asn-129, and Asn-148 each carry an N-linked (GlcNAc...) asparagine glycan. The helical transmembrane segment at 182 to 206 (FLYIGIITICVCVIQVLGMSFALTL) threads the bilayer. Over 207 to 219 (NCQIDKTSQALGL) the chain is Cytoplasmic.

It belongs to the tetraspanin (TM4SF) family. In terms of assembly, interacts with SCIMP. Interacts with CD45/PTPRC. Interacts with IL7R. Interacts with RBL2 and PPP2CA.

It is found in the cell membrane. Its subcellular location is the cell junction. The protein resides in the membrane. In terms of biological role, structural component of specialized membrane microdomains known as tetraspanin-enriched microdomains (TERMs), which act as platforms for receptor clustering and signaling. Participates thereby in diverse biological functions such as cell signal transduction, adhesion, migration and protein trafficking. Plays a role in the activation of monocytes and B-cells. Acts as an essential regulator of B-cell development by promoting interleukin-7 receptor/IL7R signaling. Also promotes, in B-cells, the BCR signaling by recruiting PKC to the plasma membrane in order to phosphorylate its substrates. Plays an essential role in lymphocyte homing to lymph nodes by stabilizing L-selectin/SELL cell surface expression. Also mediates metabolic and inflammatory functions in hepatocytes and adipose tissue by promoting TNF-alpha and LPS signaling independent of the immune compartment. Protects hematopoietic stem cell function in response to stress by facilitating DREAM complex activity through association with p130/RBL2 and its phosphatase PP2A. This is Leukocyte surface antigen CD53 (Cd53) from Mus musculus (Mouse).